The chain runs to 337 residues: uncharacterized protein (337 aa).

The segment at 291-314 is disordered; the sequence is NKTRQCSNTKTTTKSTMTPINNGF. The segment covering 299–308 has biased composition (low complexity); that stretch reads TKTTTKSTMT.

This is an uncharacterized protein from Acanthamoeba polyphaga mimivirus (APMV).